The following is a 271-amino-acid chain: Auxin-responsive protein IAA5 (271 aa).

A disordered region spans residues Met-1–Ala-96. 2 stretches are compositionally biased toward low complexity: residues Ser-14–Pro-33 and Pro-40–Gly-50. Positions Leu-44–Leu-48 match the EAR-like (transcriptional repression) motif. Residues Pro-151 to Asp-255 form the PB1 domain.

The protein belongs to the Aux/IAA family. In terms of assembly, homodimers and heterodimers.

The protein resides in the nucleus. Its function is as follows. Aux/IAA proteins are short-lived transcriptional factors that function as repressors of early auxin response genes at low auxin concentrations. In Oryza sativa subsp. japonica (Rice), this protein is Auxin-responsive protein IAA5 (IAA5).